Consider the following 514-residue polypeptide: Histidine ammonia-lyase (514 aa).

A cross-link (5-imidazolinone (Ala-Gly)) is located at residues 142-144; sequence ASG. At Ser-143 the chain carries 2,3-didehydroalanine (Ser).

It belongs to the PAL/histidase family. In terms of processing, contains an active site 4-methylidene-imidazol-5-one (MIO), which is formed autocatalytically by cyclization and dehydration of residues Ala-Ser-Gly.

It localises to the cytoplasm. The catalysed reaction is L-histidine = trans-urocanate + NH4(+). Its pathway is amino-acid degradation; L-histidine degradation into L-glutamate; N-formimidoyl-L-glutamate from L-histidine: step 1/3. The sequence is that of Histidine ammonia-lyase from Sorangium cellulosum (strain So ce56) (Polyangium cellulosum (strain So ce56)).